Consider the following 277-residue polypeptide: Soluble NSF attachment protein 29 (277 aa).

Residues 1–11 (MSRNPFDDDYR) show a composition bias toward basic and acidic residues. Disordered stretches follow at residues 1 to 30 (MSRN…MGHY), 49 to 73 (ESLD…STAQ), and 117 to 170 (KFTK…ESSR). Positions 14 to 28 (AASSTMPVKSYTTMG) are enriched in polar residues. One can recognise a t-SNARE coiled-coil homology 1 domain in the interval 44–106 (EKTLQESLDS…QMTQRNLNSL (63 aa)). Positions 49-65 (ESLDSTERSRRHLENSE) are enriched in basic and acidic residues. Polar residues predominate over residues 134-170 (SKSASRLSETATNLSSGGGSATFSGPSGQRTLTESSR). Residues 179-241 (EAMDNQIDEN…RDQDKQMQKI (63 aa)) enclose the t-SNARE coiled-coil homology 2 domain.

This sequence belongs to the SNAP-25 family.

The protein resides in the synapse. Its subcellular location is the synaptosome. SNAREs, soluble N-ethylmaleimide-sensitive factor-attachment protein receptors, are essential proteins for fusion of cellular membranes. SNAREs localized on opposing membranes assemble to form a trans-SNARE complex, an extended, parallel four alpha-helical bundle that drives membrane fusion. Plays a role in the processing and secretion of the aspartic protease hrg-7 from the intestine. The polypeptide is Soluble NSF attachment protein 29 (Caenorhabditis elegans).